Here is a 70-residue protein sequence, read N- to C-terminus: DNA-directed RNA polymerase subunit omega (70 aa).

This sequence belongs to the RNA polymerase subunit omega family. As to quaternary structure, the RNAP catalytic core consists of 2 alpha, 1 beta, 1 beta' and 1 omega subunit. When a sigma factor is associated with the core the holoenzyme is formed, which can initiate transcription.

The catalysed reaction is RNA(n) + a ribonucleoside 5'-triphosphate = RNA(n+1) + diphosphate. Functionally, promotes RNA polymerase assembly. Latches the N- and C-terminal regions of the beta' subunit thereby facilitating its interaction with the beta and alpha subunits. The protein is DNA-directed RNA polymerase subunit omega of Staphylococcus haemolyticus (strain JCSC1435).